The chain runs to 402 residues: Argininosuccinate synthase (402 aa).

Leu-7–Ser-15 is a binding site for ATP. Tyr-83 contributes to the L-citrulline binding site. Gly-113 provides a ligand contact to ATP. Thr-115, Asn-119, and Asp-120 together coordinate L-aspartate. Position 119 (Asn-119) interacts with L-citrulline. Residues Arg-123, Ser-169, Ser-178, Glu-253, and Tyr-265 each coordinate L-citrulline.

This sequence belongs to the argininosuccinate synthase family. Type 1 subfamily. Homotetramer.

It is found in the cytoplasm. The catalysed reaction is L-citrulline + L-aspartate + ATP = 2-(N(omega)-L-arginino)succinate + AMP + diphosphate + H(+). The protein operates within amino-acid biosynthesis; L-arginine biosynthesis; L-arginine from L-ornithine and carbamoyl phosphate: step 2/3. The sequence is that of Argininosuccinate synthase from Thermoplasma acidophilum (strain ATCC 25905 / DSM 1728 / JCM 9062 / NBRC 15155 / AMRC-C165).